The chain runs to 461 residues: Kynurenine 3-monooxygenase (461 aa).

The next 2 helical transmembrane spans lie at 395–415 and 432–452; these read GFMN…VTFT and ILSN…AIGI.

The protein belongs to the aromatic-ring hydroxylase family. KMO subfamily. Requires FAD as cofactor.

It localises to the mitochondrion. The protein resides in the membrane. It catalyses the reaction L-kynurenine + NADPH + O2 + H(+) = 3-hydroxy-L-kynurenine + NADP(+) + H2O. The protein operates within cofactor biosynthesis; NAD(+) biosynthesis; quinolinate from L-kynurenine: step 1/3. Its function is as follows. Catalyzes the hydroxylation of L-kynurenine (L-Kyn) to form 3-hydroxy-L-kynurenine (L-3OHKyn). Required for synthesis of quinolinic acid. In Caenorhabditis briggsae, this protein is Kynurenine 3-monooxygenase.